Here is a 287-residue protein sequence, read N- to C-terminus: Large ribosomal subunit protein uL2 (287 aa).

The segment at 221–287 (RGSVMNPCDH…SKRSRGGRDS (67 aa)) is disordered. Residues 258-287 (KTRKRNKPSNRFVLRKRRRVSKRSRGGRDS) show a composition bias toward basic residues.

Belongs to the universal ribosomal protein uL2 family. In terms of assembly, part of the 50S ribosomal subunit. Forms a bridge to the 30S subunit in the 70S ribosome.

In terms of biological role, one of the primary rRNA binding proteins. Required for association of the 30S and 50S subunits to form the 70S ribosome, for tRNA binding and peptide bond formation. It has been suggested to have peptidyltransferase activity; this is somewhat controversial. Makes several contacts with the 16S rRNA in the 70S ribosome. The polypeptide is Large ribosomal subunit protein uL2 (Prochlorococcus marinus (strain SARG / CCMP1375 / SS120)).